Reading from the N-terminus, the 704-residue chain is MSIVLIIVIVVIFLICFLYLSNSNNKNDANKNNAFIDLNPLPLNATTATTTTAVATTTTNNNNSIVAFRQNNIQELQNFERWFKNNLSYSFSQKAEKVVNPNRNWNDNTVFDNLSPWTSVPDFGTVCHTLIGYCVRYNNTSDTLYQNPELAYNLINGLRIICSKLPDPPPHQQAPWGPVADWYHFTITMPEVFMNITIVLNETQHYDEAASLTRYWLGLYLPTAVNSMGWHRTAGNSMRMGVPYTYSQILRGYSLAQIRQEQGIQEILNTIAFPYVTQGNGLHVDSIYIDHIDVRAYGYLINSYFTFAYYTYYFGDEVINTVGLTRAIENVGSPEGVVVPGVMSRNGTLYSNVIGNFITYPLAVHSADYSKVLTKLSKTYYGSVVGVTNRLAYYESDPTNNIQAPLWTMARRIWNRRGRIINYNANTVSFESGIILQSLNGIMRIPSGTTSTQSFRPTIGQTAIAKTDTAGAILVYAKFAEMNNLQFKSCTLFYDHGMFQLYYNIGVEPNSLNNTNGRVIVLSRDTSVNTNDLSFEAQRINNNNSSEGTTFNGVVCHRVPITNINVPSLTVRSPNSSVELVEQIISFQTMYTATASACYKLNVEGHSDSLRAFRVNSDENIYVNVGNGVKALFNYPWVMVKENNKVSFMSANEDTTIPFSVIMNSFTSIGEPALQYSPSNCFVYGNGFKLNNSTFDLQFIFEIV.

The N-terminal stretch at 1 to 23 (MSIVLIIVIVVIFLICFLYLSNS) is a signal peptide. Active-site proton acceptor residues include Asn-236 and His-291. The active-site Proton donor is the Tyr-299.

This sequence belongs to the baculoviridae E66 family.

The protein resides in the virion membrane. It is found in the host nucleus. The protein localises to the host cytoplasm. In terms of biological role, component of the polyhedra envelope. Plays an essential role in oral infectivity. May digest, with its chondroitin lyase activity, the chondroitin sulfate barrier of the peritrophic matrix of the host midgut to facilitate viral infection in the epithelial cells. In Lepidoptera (butterflies and moths), this protein is Non-sulfated chondroitin lyase E66 (P79).